Here is a 325-residue protein sequence, read N- to C-terminus: MASVRKAFPRRLVGLTSLRAVSTSSMGTLPKQVKIVEVGPRDGLQNEKSIVPTPVKIRLIDMLSEAGLPVIEATSFVSPKWVPQMADHSDVLKGIQKFPGINYPVLTPNMKGFEEAVAAGAKEVSVFGAVSELFTRKNANCSIEESFQRFAGVMQAAQAASISVRGYVSCALGCPYEGKVSPAKVAEVAKKLYSMGCYEISLGDTIGVGTPGLMKDMLTAVMHEVPVTALAVHCHDTYGQALANTLVALQMGVSVVDSSVAGLGGCPYAKGASGNLATEDLVYMLNGLGIHTGVNLQKLLEAGDFICQALNRKTSSKVAQATCKL.

A mitochondrion-targeting transit peptide spans 1-27 (MASVRKAFPRRLVGLTSLRAVSTSSMG). A Pyruvate carboxyltransferase domain is found at 33 to 300 (VKIVEVGPRD…HTGVNLQKLL (268 aa)). A substrate-binding site is contributed by Arg-41. Position 42 (Asp-42) interacts with a divalent metal cation. At Lys-48 the chain carries N6-acetyllysine; alternate. The residue at position 48 (Lys-48) is an N6-succinyllysine; alternate. Lys-111 carries the post-translational modification N6-acetyllysine. N6-acetyllysine; alternate is present on residues Lys-137 and Lys-179. Lys-137 and Lys-179 each carry N6-succinyllysine; alternate. Residues His-233 and His-235 each coordinate a divalent metal cation. Cys-266 is a catalytic residue. An a divalent metal cation-binding site is contributed by Asn-275. The short motif at 323–325 (CKL) is the Microbody targeting signal element. Lys-324 carries the N6-acetyllysine modification.

This sequence belongs to the HMG-CoA lyase family. Homodimer; disulfide-linked. Can also form homotetramers.

The protein localises to the mitochondrion matrix. The protein resides in the peroxisome. The enzyme catalyses (3S)-3-hydroxy-3-methylglutaryl-CoA = acetoacetate + acetyl-CoA. It participates in metabolic intermediate metabolism; (S)-3-hydroxy-3-methylglutaryl-CoA degradation; acetoacetate from (S)-3-hydroxy-3-methylglutaryl-CoA: step 1/1. Its function is as follows. Mitochondrial 3-hydroxy-3-methylglutaryl-CoA lyase that catalyzes a cation-dependent cleavage of (S)-3-hydroxy-3-methylglutaryl-CoA into acetyl-CoA and acetoacetate, a key step in ketogenesis. Terminal step in leucine catabolism. Ketone bodies (beta-hydroxybutyrate, acetoacetate and acetone) are essential as an alternative source of energy to glucose, as lipid precursors and as regulators of metabolism. The chain is Hydroxymethylglutaryl-CoA lyase, mitochondrial (Hmgcl) from Mus musculus (Mouse).